A 705-amino-acid chain; its full sequence is Elongation factor G (705 aa).

In terms of domain architecture, tr-type G spans 8 to 290; that stretch reads ERYRNFGIMA…GVVHLLPSPA (283 aa). GTP-binding positions include 17–24, 88–92, and 142–145; these read AHIDAGKT, DTPGH, and NKMD. The interval 290–309 is disordered; that stretch reads ADRPPVQGIDEDEKEDTRAA.

This sequence belongs to the TRAFAC class translation factor GTPase superfamily. Classic translation factor GTPase family. EF-G/EF-2 subfamily.

It localises to the cytoplasm. Its function is as follows. Catalyzes the GTP-dependent ribosomal translocation step during translation elongation. During this step, the ribosome changes from the pre-translocational (PRE) to the post-translocational (POST) state as the newly formed A-site-bound peptidyl-tRNA and P-site-bound deacylated tRNA move to the P and E sites, respectively. Catalyzes the coordinated movement of the two tRNA molecules, the mRNA and conformational changes in the ribosome. This chain is Elongation factor G, found in Xanthomonas euvesicatoria pv. vesicatoria (strain 85-10) (Xanthomonas campestris pv. vesicatoria).